We begin with the raw amino-acid sequence, 1822 residues long: Signal-induced proliferation-associated 1-like protein 1 (1822 aa).

2 disordered regions span residues 1 to 30 (MTSLKRSQTERPVTADRASVVSTDGTPKVH) and 47 to 125 (GSSV…VSLN). Basic and acidic residues predominate over residues 84 to 94 (PPRKENVKESS). Low complexity predominate over residues 95–125 (RSSQEIETSSCLESLSSKGSPVSQGSSVSLN). Phosphoserine occurs at positions 162, 187, 193, 208, 255, and 288. The disordered stretch occupies residues 277–297 (EREKPLKRRSKSETGDSSIFR). Residues 638-855 (FMKLDEQGLN…RTRQEYLKDL (218 aa)) form the Rap-GAP domain. The PDZ domain occupies 992 to 1068 (EMTLRRNGLG…VKVVIIPPHD (77 aa)). A phosphoserine mark is found at serine 1117, serine 1126, serine 1155, serine 1166, serine 1188, serine 1209, and serine 1220. Residues 1134–1165 (AGKGDGKMPLPERAANIPRSISSDGRPLERRL) form a disordered region. The disordered stretch occupies residues 1183–1252 (SQCRNSPSNL…WQRSEDSLAD (70 aa)). The segment covering 1188 to 1198 (SPSNLSSSSET) has biased composition (low complexity). The span at 1225-1244 (DRQNTQSDIGGSGKSTPSWQ) shows a compositional bias: polar residues. Phosphoserine is present on residues serine 1273 and serine 1288. Residues 1286–1324 (HLSPNKQGHSDSHYSSHSSSNTLSSNASSAHSDEKWYDG) form a disordered region. Residues 1300–1315 (SSHSSSNTLSSNASSA) show a composition bias toward low complexity. Serine 1344 is modified (phosphoserine; by PLK2). Threonine 1348 is subject to Phosphothreonine; by PLK2. Residues 1358 to 1367 (TASLGASTSS) are compositionally biased toward low complexity. Residues 1358-1382 (TASLGASTSSPRSGPGKEKVAPLWH) form a disordered region. Residue serine 1367 is modified to Phosphoserine; by CDK5. Position 1384 is a phosphoserine (serine 1384). The span at 1395–1407 (LETEGHGMDRKTE) shows a compositional bias: basic and acidic residues. Positions 1395 to 1493 (LETEGHGMDR…SSSGPRTFYP (99 aa)) are disordered. 5 positions are modified to phosphoserine: serine 1408, serine 1409, serine 1430, serine 1449, and serine 1451. The span at 1417 to 1436 (KSQGGSSPLTRENSTFSIND) shows a compositional bias: polar residues. Low complexity-rich tracts occupy residues 1437–1451 (ATSHTSTMSSRHSAS) and 1471–1486 (SSQLAPSFSSSSSSSS). Phosphoserine occurs at positions 1546 and 1567. Positions 1567 to 1595 (SPTPESQKNFKFHGLSSPQSPFPSTPTSR) are disordered. At threonine 1569 the chain carries Phosphothreonine. Serine 1572, serine 1583, serine 1586, serine 1603, and serine 1606 each carry phosphoserine. Arginine 1619 is subject to Asymmetric dimethylarginine. A phosphoserine mark is found at serine 1621, serine 1665, serine 1668, serine 1726, serine 1729, serine 1746, serine 1747, and serine 1752. Residues 1753–1813 (PTLASKVDQL…ASDKLKKFTE (61 aa)) are a coiled coil.

In terms of assembly, interacts (via PDZ domain) with EPHA4 (via PDZ motif); controls neuronal morphology through regulation of the RAP1 (RAP1A or RAP1B) and RAP2 (RAP2A, RAP2B or RAP2C) GTPases. Interacts with DLG4, PDLIM5, PDLIM7 and LZTS3. Interacts with the actin cytoskeleton. Ubiquitinated and degraded by the SCF(BTRC) following phosphorylation by PLK2. In terms of processing, phosphorylated at Ser-1367 by CDK5, creating a docking site for the POLO box domains of PLK2. Subsequently, PLK2 binds and phosphorylates SIPA1L1, leading to ubiquitination and degradation by the proteasome. Detected in brain (at protein level).

It localises to the cytoplasm. It is found in the cytoskeleton. The protein resides in the postsynaptic density. Its subcellular location is the synapse. The protein localises to the synaptosome. In terms of biological role, stimulates the GTPase activity of RAP2A. Promotes reorganization of the actin cytoskeleton and recruits DLG4 to F-actin. Contributes to the regulation of dendritic spine morphogenesis. This is Signal-induced proliferation-associated 1-like protein 1 (Sipa1l1) from Rattus norvegicus (Rat).